A 1017-amino-acid polypeptide reads, in one-letter code: Multiple C2 domain and transmembrane region protein 14 (1017 aa).

The C2 1 domain occupies 1–110 (MADNVLRKLI…ASAGSETLVY (110 aa)). The disordered stretch occupies residues 139–231 (AAPAATEPKP…PAEVKNPPIP (93 aa)). Residues 141–153 (PAATEPKPEAAAA) show a composition bias toward low complexity. A compositionally biased stretch (basic and acidic residues) spans 154–213 (TEEKPPEIAKAEDGKKETEAAKTEEKKEGDKKEEEKPKEEAKPDEKKPDAPPDTKAKKPD). Over residues 217 to 231 (APPPPPAEVKNPPIP) the composition is skewed to pro residues. C2 domains lie at 258–387 (DLEL…PQWY), 420–554 (DSGG…SRWF), and 587–714 (VTSD…LNSY). Asp296, Asn299, Asp352, Thr355, and Glu359 together coordinate Ca(2+). 2 consecutive transmembrane segments (helical) span residues 851-871 (VAIVLCPHLVLPTVFMYAFLI) and 957-977 (ATCIFVVFCLFASFLFYIVPF).

Belongs to the MCTP family. It depends on Ca(2+) as a cofactor. In terms of tissue distribution, expressed in incipient leaf primordia and in roots meristems. Observed in flowers.

The protein resides in the membrane. It localises to the vesicle. The protein localises to the golgi apparatus membrane. In terms of biological role, may function as a signaling molecule by regulating the trafficking of other regulators. In Arabidopsis thaliana (Mouse-ear cress), this protein is Multiple C2 domain and transmembrane region protein 14.